The following is a 628-amino-acid chain: Probable alpha-L-arabinofuranosidase A (628 aa).

An N-terminal signal peptide occupies residues 1 to 25 (MVAFSALSGVSAVSLLLSLVQNAHG). N-linked (GlcNAc...) asparagine glycosylation is found at Asn-36, Asn-51, Asn-74, Asn-152, Asn-171, Asn-260, Asn-359, Asn-440, Asn-493, and Asn-610.

Belongs to the glycosyl hydrolase 51 family.

Its subcellular location is the secreted. The enzyme catalyses Hydrolysis of terminal non-reducing alpha-L-arabinofuranoside residues in alpha-L-arabinosides.. Its pathway is glycan metabolism; L-arabinan degradation. Alpha-L-arabinofuranosidase involved in the degradation of arabinoxylan, a major component of plant hemicellulose. Acts only on small linear 1,5-alpha-linked L-arabinofuranosyl oligosaccharides. The sequence is that of Probable alpha-L-arabinofuranosidase A (abfA) from Aspergillus niger (strain ATCC MYA-4892 / CBS 513.88 / FGSC A1513).